Reading from the N-terminus, the 123-residue chain is Aspartate 1-decarboxylase (123 aa).

Ser-25 (schiff-base intermediate with substrate; via pyruvic acid) is an active-site residue. At Ser-25 the chain carries Pyruvic acid (Ser). Residue Thr-57 participates in substrate binding. The Proton donor role is filled by Tyr-58. A substrate-binding site is contributed by 73-75 (GAA).

It belongs to the PanD family. Heterooctamer of four alpha and four beta subunits. It depends on pyruvate as a cofactor. In terms of processing, is synthesized initially as an inactive proenzyme, which is activated by self-cleavage at a specific serine bond to produce a beta-subunit with a hydroxyl group at its C-terminus and an alpha-subunit with a pyruvoyl group at its N-terminus.

It is found in the cytoplasm. It carries out the reaction L-aspartate + H(+) = beta-alanine + CO2. Its pathway is cofactor biosynthesis; (R)-pantothenate biosynthesis; beta-alanine from L-aspartate: step 1/1. Its function is as follows. Catalyzes the pyruvoyl-dependent decarboxylation of aspartate to produce beta-alanine. The polypeptide is Aspartate 1-decarboxylase (Clostridium novyi (strain NT)).